We begin with the raw amino-acid sequence, 203 residues long: Outer-membrane lipoprotein carrier protein (203 aa).

An N-terminal signal peptide occupies residues 1-19 (MKKSIVVLFSAVLPFAVFA).

It belongs to the LolA family. As to quaternary structure, monomer.

The protein resides in the periplasm. In terms of biological role, participates in the translocation of lipoproteins from the inner membrane to the outer membrane. Only forms a complex with a lipoprotein if the residue after the N-terminal Cys is not an aspartate (The Asp acts as a targeting signal to indicate that the lipoprotein should stay in the inner membrane). This chain is Outer-membrane lipoprotein carrier protein, found in Shewanella amazonensis (strain ATCC BAA-1098 / SB2B).